An 881-amino-acid chain; its full sequence is MEARIDEGGEAQQFYGSVGKRSVEWDLNDWKWDGDLFLATQTTRGRQFFPLGNSSNSSSSCSDEGNDKKRRAVAIQGDTNGALTLNLNGESDGLFPAKKTKSGAVCQVENCEADLSKVKDYHRRHKVCEMHSKATSATVGGILQRFCQQCSRFHLLQEFDEGKRSCRRRLAGHNKRRRKTNPEPGANGNPSDDHSSNYLLITLLKILSNMHNHTGDQDLMSHLLKSLVSHAGEQLGKNLVELLLQGGGSQGSLNIGNSALLGIEQAPQEELKQFSARQDGTATENRSEKQVKMNDFDLNDIYIDSDDTDVERSPPPTNPATSSLDYPSWIHQSSPPQTSRNSDSASDQSPSSSSEDAQMRTGRIVFKLFGKEPNEFPIVLRGQILDWLSHSPTDMESYIRPGCIVLTIYLRQAETAWEELSDDLGFSLGKLLDLSDDPLWTTGWIYVRVQNQLAFVYNGQVVVDTSLSLKSRDYSHIISVKPLAIAATEKAQFTVKGMNLRQRGTRLLCSVEGKYLIQETTHDSTTREDDDFKDNSEIVECVNFSCDMPILSGRGFMEIEDQGLSSSFFPFLVVEDDDVCSEIRILETTLEFTGTDSAKQAMDFIHEIGWLLHRSKLGESDPNPGVFPLIRFQWLIEFSMDREWCAVIRKLLNMFFDGAVGEFSSSSNATLSELCLLHRAVRKNSKPMVEMLLRYIPKQQRNSLFRPDAAGPAGLTPLHIAAGKDGSEDVLDALTEDPAMVGIEAWKTCRDSTGFTPEDYARLRGHFSYIHLIQRKINKKSTTEDHVVVNIPVSFSDREQKEPKSGPMASALEITQIPCKLCDHKLVYGTTRRSVAYRPAMLSMVAIAAVCVCVALLFKSCPEVLYVFQPFRWELLDYGTS.

Residues 49–69 (FPLGNSSNSSSSCSDEGNDKK) are disordered. Residues 53-62 (NSSNSSSSCS) show a composition bias toward low complexity. The tract at residues 96–187 (PAKKTKSGAV…RKTNPEPGAN (92 aa)) is sufficient and necessary for DNA binding. An SBP-type zinc finger spans residues 103–180 (GAVCQVENCE…AGHNKRRRKT (78 aa)). Positions 106, 111, 128, 131, 147, 150, 154, and 166 each coordinate Zn(2+). Positions 163-179 (KRSCRRRLAGHNKRRRK) match the Bipartite nuclear localization signal motif. Residues 170–179 (LAGHNKRRRK) are compositionally biased toward basic residues. Disordered regions lie at residues 170–193 (LAGH…PSDD) and 274–358 (FSAR…EDAQ). The segment covering 275–284 (SARQDGTATE) has biased composition (polar residues). The span at 285 to 295 (NRSEKQVKMND) shows a compositional bias: basic and acidic residues. The segment covering 319–338 (PATSSLDYPSWIHQSSPPQT) has biased composition (polar residues). Positions 339-356 (SRNSDSASDQSPSSSSED) are enriched in low complexity.

The cofactor is Zn(2+).

The protein resides in the nucleus. In terms of biological role, trans-acting factor that binds specifically to the consensus nucleotide sequence 5'-TNCGTACAA-3' of AP1 promoter. Binds specifically to the 5'-GTAC-3' core sequence. The sequence is that of Squamosa promoter-binding-like protein 1 (SPL1) from Arabidopsis thaliana (Mouse-ear cress).